Consider the following 404-residue polypeptide: CD2 homolog (404 aa).

The signal sequence occupies residues 1-16 (MFITLIFLSYINIVLS). Over 17–225 (NNYWARLNET…QNYFLENIHT (209 aa)) the chain is Extracellular. Residues Asn-24, Asn-87, Asn-92, Asn-96, Asn-122, Asn-139, Asn-167, Asn-193, Asn-200, and Asn-206 are each glycosylated (N-linked (GlcNAc...) asparagine; by host). Disulfide bonds link Cys-140-Cys-207 and Cys-147-Cys-190. The helical transmembrane segment at 226–246 (LFYIIIFIVSGLIASIFISII) threads the bilayer. Over 247–404 (TFLSLRKRKK…ISLIHVDRII (158 aa)) the chain is Cytoplasmic. A disordered region spans residues 260–295 (EIESPPPESNEEEQCQHDDTTSIHEPSPREPLLPKP). The segment covering 273 to 287 (QCQHDDTTSIHEPSP) has biased composition (basic and acidic residues). 7 repeat units span residues 322–327 (NPCPPP), 328–333 (KPCPPP), 334–339 (KPCPPP), 340–345 (KPCPPP), 346–351 (KPCPPP), 352–357 (KPCPPP), and 358–363 (KPCPPP). Positions 322–363 (NPCPPPKPCPPPKPCPPPKPCPPPKPCPPPKPCPPPKPCPPP) are 7 X 6 AA tandem repeats of [KN]-P-C-P-P-P. The segment covering 357-388 (PKPCPPPKPCSSPESYSPPKPLPSIPLLPNIP) has biased composition (pro residues). The disordered stretch occupies residues 357–390 (PKPCPPPKPCSSPESYSPPKPLPSIPLLPNIPPL).

The protein belongs to the asfivirus CD2 homolog protein family. In terms of assembly, both glycosylated and nonglycosylated forms interact (via C-terminus) with the host AP-1 complex. In terms of processing, cleaved into two fragments of 63 kDa and 26 kDa containing respectively the glycosylated N-terminus and the nonglycosylated C-terminus. A full-length 89-kDa glycosylated form also exists.

It localises to the host membrane. The protein localises to the virion membrane. It is found in the host Golgi apparatus. May play an immunosuppressive role by inhibiting lymphocyte proliferation and subsequently facilitating viral replication and generalization of infection. Responsible for viral hemadsorption, which may help viral spread. Increases virus replication in the tick vector at the step of virus uptake or replication in the tick gut. May play a role in the host Golgi reorganization to yield viral factories. May play a role in host cell penetration. In African swine fever virus (isolate Tick/South Africa/Pretoriuskop Pr4/1996) (ASFV), this protein is CD2 homolog.